A 334-amino-acid polypeptide reads, in one-letter code: Probable peptidoglycan endopeptidase LytE (334 aa).

The first 25 residues, 1-25 (MKKQIITATTAVVLGSTLFAGAASA), serve as a signal peptide directing secretion. LysM domains follow at residues 26–69 (QSIK…TLSI), 86–129 (STYK…VLKL), and 149–192 (STYK…VLKV). Disordered stretches follow at residues 70–89 (NGKS…STYK), 131–153 (GSTS…TYKV), and 195–215 (TSTS…KTSS). Low complexity-rich tracts occupy residues 72 to 87 (KSTS…SSST) and 132 to 153 (STSS…TYKV). Positions 217 to 334 (SLNVSKLVSD…KPRYLGAKRF (118 aa)) constitute a NlpC/P60 domain. The active-site Nucleophile is the C247. Catalysis depends on H296, which acts as the Proton acceptor. H308 is an active-site residue.

The protein belongs to the peptidase C40 family.

Its subcellular location is the secreted. The protein localises to the cell wall. In terms of biological role, cell wall hydrolase that cleaves gamma-D-glutamate-meso-diaminopimelate bonds in peptidoglycan. Seems to play a role in cell separation during vegetative growth. The polypeptide is Probable peptidoglycan endopeptidase LytE (lytE) (Bacillus subtilis (strain 168)).